We begin with the raw amino-acid sequence, 449 residues long: Phosphoglucosamine mutase (449 aa).

S101 functions as the Phosphoserine intermediate in the catalytic mechanism. The Mg(2+) site is built by S101, D243, D245, and D247. Phosphoserine is present on S101.

It belongs to the phosphohexose mutase family. Requires Mg(2+) as cofactor. Activated by phosphorylation.

It catalyses the reaction alpha-D-glucosamine 1-phosphate = D-glucosamine 6-phosphate. In terms of biological role, catalyzes the conversion of glucosamine-6-phosphate to glucosamine-1-phosphate. This is Phosphoglucosamine mutase from Syntrophus aciditrophicus (strain SB).